Consider the following 335-residue polypeptide: Cholinephosphotransferase 1 (335 aa).

2 helical membrane-spanning segments follow: residues 53–73 (PNAITLGGLLLNCLTALPLIA) and 84–108 (FWAYILGALGLFIYQSLDAIDGKQA). Asn-54 provides a ligand contact to CDP-choline. Asp-101 and Asp-104 together coordinate Mg(2+). Arg-109 serves as a coordination point for CDP-choline. Transmembrane regions (helical) follow at residues 116–140 (PLGELFDHGCDSISTVFVVLGSCIA), 151–169 (FFCCFVGLFMFYSAHWQTY), 181–197 (VTEVQIAITMLLLVSAF), 213–238 (ELKFFAVVGILCGTAVSCFNYFRIIF), 267–276 (IGPGLLFLDQ), and 284–313 (EYVVLWIALFISLFDMLRYATGVCLQIAAH). A Mg(2+)-binding site is contributed by Asp-122. His-123 (proton acceptor) is an active-site residue. Residue Asp-126 coordinates Mg(2+).

This sequence belongs to the CDP-alcohol phosphatidyltransferase class-I family. It depends on Mg(2+) as a cofactor. The cofactor is Mn(2+).

The protein resides in the golgi apparatus membrane. It carries out the reaction CDP-choline + a 1,2-diacyl-sn-glycerol = a 1,2-diacyl-sn-glycero-3-phosphocholine + CMP + H(+). The enzyme catalyses 1-octadecanoyl-2-(5Z,8Z,11Z,14Z-eicosatetraenoyl)-sn-glycerol + CDP-choline = 1-octadecanoyl-2-(5Z,8Z,11Z,14Z-eicosatetraenoyl)-sn-glycero-3-phosphocholine + CMP + H(+). It catalyses the reaction 1-hexadecanoyl-2-(9Z-octadecenoyl)-sn-glycerol + CDP-choline = 1-hexadecanoyl-2-(9Z-octadecenoyl)-sn-glycero-3-phosphocholine + CMP + H(+). The catalysed reaction is 1-hexadecanoyl-2-(4Z,7Z,10Z,13Z,16Z,19Z-docosahexaenoyl)-sn-glycerol + CDP-choline = 1-hexadecanoyl-2-(4Z,7Z,10Z,13Z,16Z,19Z-docosahexaenoyl)-sn-glycero-3-phosphocholine + CMP + H(+). It carries out the reaction 1,2-dioctanoyl-sn-glycerol + CDP-choline = 1,2-dioctanoyl-sn-glycero-3-phosphocholine + CMP + H(+). It functions in the pathway phospholipid metabolism; phosphatidylcholine biosynthesis; phosphatidylcholine from phosphocholine: step 2/2. Catalyzes the final step of de novo phosphatidylcholine (PC) synthesis, i.e. the transfer of choline phosphate from CDP-choline to the free hydroxyl of a diacylglycerol (DAG), producing a PC. It thereby plays a central role in the formation and maintenance of vesicular membranes. The chain is Cholinephosphotransferase 1 (CHPT1) from Gallus gallus (Chicken).